An 824-amino-acid chain; its full sequence is MKPIPAAPEPLGQHQDSPRRKDKGEAESERQRTRERLEATLAGLAELGHLRHRQEVLIKSVLSPGTRTHGDAAARTGDNPRSLEEKFLEDNILLLKKQLNCLRKRDAGLLSQLHELDKQINDLRIDVEKTEEHLETDSRPSSGFYELSDGTSGSLSNSSNSVFSECLSSCHSSTCFCNPLETSLNLTDGQAKSADDFLEWLDYRESQHETGTVRRSFSAPHSNSVDIEADVHPKYQCDLVSKNGNDIYRYPSPLHAVAVQSPMFLLSVMGNIKAEEPEEGIDHNDNDDCIVPELDHLKDEDSFLHQSSLCSLPLSSAKKMDGYILSIIQKKAHPVRTNKPRTSVNADPGKGILRHGSMCVKQTGGVSQSNAVNLKNSKQTCLHSTGMIAVDNSTYPSLKQCSKESLSEQLESKRMPSISTYPSCNVNELQSQNNSRNTVKSVCQGLARGSVAMTSNVQKENVTPNALANLSNTSSSVCNVTPGESMQNSPLLPQEIKVVPPVKRVSPQNTLLSYHASSSFDERPPLDFKSEGSSSQSLDEGLLVNAHYIPAQQQGVKLHKHTKYVKIVKSSTLKHRANVQYVAENGSQTLKEKSKVVGKKCRFPDDLDTNKKVKKSTLRVKKTAHPHFEPAVVGRNPVAVRSGSKSHGHSKDVVLAKPKHKRGDYRRWKSSAEISYEEALRRARRRAQGEMVGVYAQVPFPYSSPYAYIASDSEYSAECESLFHSTVVDTSEDEQSNYTTNCFGDSESSLSEVEFVGESTTSSDTDESGGLIWSQFVQTLPMQATATAELQTTAKAFVKIKASHNLKKKILRFRSGSLKLMTTV.

Disordered regions lie at residues 1 to 33 (MKPI…RQRT), 131 to 150 (EEHL…LSDG), and 515 to 534 (HASS…EGSS). The tract at residues 2-343 (KPIPAAPEPL…PVRTNKPRTS (342 aa)) is interaction with tcf7l1-A. Positions 16 to 33 (DSPRRKDKGEAESERQRT) are enriched in basic and acidic residues. The stretch at 84 to 139 (EEKFLEDNILLLKKQLNCLRKRDAGLLSQLHELDKQINDLRIDVEKTEEHLETDSR) forms a coiled coil. The span at 520–530 (FDERPPLDFKS) shows a compositional bias: basic and acidic residues. Residues 821-824 (MTTV) carry the PDZ-binding motif.

This sequence belongs to the dapper family. In terms of assembly, interacts with dbf4 and tcf7l1-A. Interacts with dvl2/dsh; the interaction is required for dact1-b phosphorylation by CaMK1D and seems to become disrupted by the phosphorylation. In terms of processing, phosphorylated by CaMK1D; the phosphorylation requires binding to dvl2/dsh. In terms of tissue distribution, expressed both in the dorsal lip in early gastrula and throughout the posterior presumptive ectoderm in early neurula. Expressed in the dorsal neural folds at the tailbud stage and highly expressed in the tadpole head, including the brain, retina and cartilaginous branchial arch derivatives.

The protein localises to the cytoplasm. The protein resides in the nucleus. Functionally, involved in regulation of intracellular signaling pathways during development. Specifically thought to play a role in canonical and/or non-canonical Wnt signaling pathways through interaction with DSH (Dishevelled) family proteins. Binds to dvl2 to regulate the degradation of beta-catenin (ctnnb1-A and possibly ctnnb1-B), thereby modulating the transcriptional activation of target genes of the Wnt signaling pathway. Seems to promote beta-catenin degradation if not phosphorylated and to block beta-catenin degradation if phosphorylated by CaMK1D. Involved in regulation of catenin delta/ctnnd1 protein level. May also bind to and directly stimulate the activity of tcf7l1-A. Also regulates the activation by dvl2 of jnk, a component of ctnnb1/beta-catenin-independent frizzled signaling. Required for notochord and head formation. This is Dapper 1-B (dact1-b) from Xenopus laevis (African clawed frog).